The following is a 150-amino-acid chain: SsrA-binding protein (150 aa).

It belongs to the SmpB family.

It localises to the cytoplasm. Required for rescue of stalled ribosomes mediated by trans-translation. Binds to transfer-messenger RNA (tmRNA), required for stable association of tmRNA with ribosomes. tmRNA and SmpB together mimic tRNA shape, replacing the anticodon stem-loop with SmpB. tmRNA is encoded by the ssrA gene; the 2 termini fold to resemble tRNA(Ala) and it encodes a 'tag peptide', a short internal open reading frame. During trans-translation Ala-aminoacylated tmRNA acts like a tRNA, entering the A-site of stalled ribosomes, displacing the stalled mRNA. The ribosome then switches to translate the ORF on the tmRNA; the nascent peptide is terminated with the 'tag peptide' encoded by the tmRNA and targeted for degradation. The ribosome is freed to recommence translation, which seems to be the essential function of trans-translation. The sequence is that of SsrA-binding protein from Magnetococcus marinus (strain ATCC BAA-1437 / JCM 17883 / MC-1).